Reading from the N-terminus, the 323-residue chain is Elongation factor P--(R)-beta-lysine ligase (323 aa).

A substrate-binding site is contributed by 76 to 78 (SPE). Residues 100-102 (RNE) and Asn-109 each bind ATP. Residue Tyr-118 coordinates substrate. ATP is bound at residue 242-243 (EL). Glu-249 lines the substrate pocket. Residue Gly-298 participates in ATP binding.

The protein belongs to the class-II aminoacyl-tRNA synthetase family. EpmA subfamily. In terms of assembly, homodimer.

The enzyme catalyses D-beta-lysine + L-lysyl-[protein] + ATP = N(6)-((3R)-3,6-diaminohexanoyl)-L-lysyl-[protein] + AMP + diphosphate + H(+). With EpmB is involved in the beta-lysylation step of the post-translational modification of translation elongation factor P (EF-P). Catalyzes the ATP-dependent activation of (R)-beta-lysine produced by EpmB, forming a lysyl-adenylate, from which the beta-lysyl moiety is then transferred to the epsilon-amino group of a conserved specific lysine residue in EF-P. This chain is Elongation factor P--(R)-beta-lysine ligase, found in Pasteurella multocida (strain Pm70).